The following is a 938-amino-acid chain: MSDYKKTLQLPETKFPMKANLTQREPEMLRKWEKDDAYGAMVRASGQQGTYVLHDGPPYANGNIHMGHALNKILKDIIVKSRNLQGFKAEYVPGWDCHGLPIELKVEHELGEKKRTMPAHAVRKRCRQYAEKYLDIQRKEFKRLGVFGAWDKPYVTMHPSYEAATARELGNFAAKGGLVRSKKPIYWCCSCQTALAEAEVEYHDHTSPSVHVRFPLRDPRVAEVLPGVDPAHAYIVIWTTTPWTLPDNMAVAVHPDFDYVVVRHGGDFHIVAEGLLEACLKAFKWDEHEVVARIGGRALEGLKATHPFYDRPSPIVLADYVTLESGTGCVHTAPGHGREDYETGLRYGLDIYSPLTDEGRYLDCVEFFAGMTIFEANPKVIEKLREVGNLLAEGRITHSYPHCWRCKKPVIFRATTQWFIAMERNDLRQKALDAIRDDVRWIPSWGQERIHNMIEFRPDWCISRQRMWGVPIVALLCEDCGEAWNDADWMRDIAERFAKHATGCDYWYETDLSDIVPAGLRCPKCGGDHWKKETDILDVWFDSGTSFAAVVEQREECGFPADLYLEGSDQHRGWFHSSLLASIGTRGVPPYRSVLTHGYVVDGDGRKMSKSVGNVVAPQEIIDKHGAEVLRLWVASVDYREDIRISEEILNRLVDAYRRIRNTCRYLLGNISDLTPETMVPFEAMDPLDRFALDLASRAHERIQDAYTEYEFHKVFHTLHNLCVTDLSAFYLDILKDRLYSSAADSHARRSAQTALYRILMLMVRDMAPVLSFTAEEVFGYVPAALRPDVISVFALPATDAPAFTLDTTSRAAWEKLLAVRSETTKAIEPLRKSGEVGHSLDTHVTLFADPSLKATLEGLGSDLRAMFIVSRLEVMDLADAPADAWTSEELPELKVTVRKAEGEKCERCWIISADLGTDAAHPTLCPRCTAVLTGTGA.

A 'HIGH' region motif is present at residues 58 to 68 (PYANGNIHMGH). Residue Glu566 participates in L-isoleucyl-5'-AMP binding. The short motif at 607-611 (KMSKS) is the 'KMSKS' region element. Lys610 contacts ATP. Residues Cys906, Cys909, Cys926, and Cys929 each contribute to the Zn(2+) site.

The protein belongs to the class-I aminoacyl-tRNA synthetase family. IleS type 1 subfamily. In terms of assembly, monomer. Zn(2+) is required as a cofactor.

Its subcellular location is the cytoplasm. It carries out the reaction tRNA(Ile) + L-isoleucine + ATP = L-isoleucyl-tRNA(Ile) + AMP + diphosphate. Its function is as follows. Catalyzes the attachment of isoleucine to tRNA(Ile). As IleRS can inadvertently accommodate and process structurally similar amino acids such as valine, to avoid such errors it has two additional distinct tRNA(Ile)-dependent editing activities. One activity is designated as 'pretransfer' editing and involves the hydrolysis of activated Val-AMP. The other activity is designated 'posttransfer' editing and involves deacylation of mischarged Val-tRNA(Ile). This chain is Isoleucine--tRNA ligase, found in Nitratidesulfovibrio vulgaris (strain ATCC 29579 / DSM 644 / CCUG 34227 / NCIMB 8303 / VKM B-1760 / Hildenborough) (Desulfovibrio vulgaris).